The following is a 715-amino-acid chain: Probable phospholipase YOR022C, mitochondrial (715 aa).

Residues 1 to 22 constitute a mitochondrion transit peptide; it reads MLRFTHRGLPSSTRFRNIFVRL. Disordered stretches follow at residues 161-180, 242-268, and 311-340; these read YPVD…NKDE, TSTS…SRSI, and YNNA…RQIR. Low complexity predominate over residues 242–251; sequence TSTSFKAAKT. Positions 311-324 are enriched in polar residues; that stretch reads YNNADNSQGANASS. Residue serine 501 is part of the active site. In terms of domain architecture, DDHD spans 519–700; it reads LEFQVDNLFF…AAFILKEILS (182 aa).

The protein belongs to the PA-PLA1 family.

Its subcellular location is the mitochondrion. Probable phospholipase that hydrolyzes phosphatidic acid. The polypeptide is Probable phospholipase YOR022C, mitochondrial (Saccharomyces cerevisiae (strain ATCC 204508 / S288c) (Baker's yeast)).